Here is a 203-residue protein sequence, read N- to C-terminus: Small ribosomal subunit protein uS4 (203 aa).

The region spanning 93-156 is the S4 RNA-binding domain; the sequence is RRLDNVVYRL…IKVPAILEAV (64 aa).

Belongs to the universal ribosomal protein uS4 family. As to quaternary structure, part of the 30S ribosomal subunit. Contacts protein S5. The interaction surface between S4 and S5 is involved in control of translational fidelity.

One of the primary rRNA binding proteins, it binds directly to 16S rRNA where it nucleates assembly of the body of the 30S subunit. In terms of biological role, with S5 and S12 plays an important role in translational accuracy. This is Small ribosomal subunit protein uS4 from Streptococcus suis (strain 98HAH33).